Here is a 465-residue protein sequence, read N- to C-terminus: Purple acid phosphatase 2 (465 aa).

Positions 1 to 32 are cleaved as a signal peptide; sequence MGASRTGCYLLAVVLAAVMNAAIAGITSSFIR. N-linked (GlcNAc...) asparagine glycosylation is found at Asn-110 and Asn-138. Fe cation is bound at residue Asp-164. The N-linked (GlcNAc...) asparagine glycan is linked to Asn-172. Asp-193 and Tyr-196 together coordinate Fe cation. Position 193 (Asp-193) interacts with Mn(2+). Position 230 (Asn-230) interacts with Mn(2+). Residue Asn-230 participates in substrate binding. An N-linked (GlcNAc...) asparagine glycan is attached at Asn-303. His-315 serves as a coordination point for Mn(2+). His-325 acts as the Proton donor in catalysis. His-352 lines the Mn(2+) pocket. 352-354 is a binding site for substrate; that stretch reads HVH. His-354 is a Fe cation binding site. Residues Asn-400 and Asn-425 are each glycosylated (N-linked (GlcNAc...) asparagine).

The protein belongs to the metallophosphoesterase superfamily. Purple acid phosphatase family. Homodimer; disulfide-linked. Fe cation is required as a cofactor. The cofactor is Mn(2+). It depends on Zn(2+) as a cofactor. Cu(2+) serves as cofactor. Requires Mg(2+) as cofactor.

The protein localises to the secreted. It carries out the reaction a phosphate monoester + H2O = an alcohol + phosphate. This is Purple acid phosphatase 2 (PAP2) from Ipomoea batatas (Sweet potato).